A 314-amino-acid chain; its full sequence is Ribosomal RNA large subunit methyltransferase F (314 aa).

The protein belongs to the methyltransferase superfamily. METTL16/RlmF family.

The protein resides in the cytoplasm. It carries out the reaction adenosine(1618) in 23S rRNA + S-adenosyl-L-methionine = N(6)-methyladenosine(1618) in 23S rRNA + S-adenosyl-L-homocysteine + H(+). Functionally, specifically methylates the adenine in position 1618 of 23S rRNA. This is Ribosomal RNA large subunit methyltransferase F from Flavobacterium psychrophilum (strain ATCC 49511 / DSM 21280 / CIP 103535 / JIP02/86).